We begin with the raw amino-acid sequence, 158 residues long: E3 ubiquitin ligase complex SCF subunit sconC (158 aa).

Residues 100–158 (ILAANYLDIKALLDVGCKTVANMIKGKSPEEIRKTFNIQNDFTPEEEDQIRRENEWAEE) form an interaction with the F-box domain of F-box proteins region.

This sequence belongs to the SKP1 family. Component of the SCF (SKP1-CUL1-F-box protein) E3 ubiquitin ligase complexes.

It functions in the pathway protein modification; protein ubiquitination. In terms of biological role, essential component of the SCF (SKP1-CUL1-F-box protein) E3 ubiquitin ligase complexes, which mediate the ubiquitination and subsequent proteasomal degradation of target proteins. Controls sulfur metabolite repression, probably by mediating the inactivation or degradation of the metR transcription factor. This chain is E3 ubiquitin ligase complex SCF subunit sconC (sconC), found in Aspergillus fumigatus (strain CBS 144.89 / FGSC A1163 / CEA10) (Neosartorya fumigata).